The primary structure comprises 577 residues: Chaperonin CPN60-1, mitochondrial (577 aa).

A mitochondrion-targeting transit peptide spans 1 to 34; sequence MYRAAASLASKARQAGNSLATRQVGSRLAWSRNY.

This sequence belongs to the chaperonin (HSP60) family.

The protein resides in the mitochondrion. In terms of biological role, implicated in mitochondrial protein import and macromolecular assembly. May facilitate the correct folding of imported proteins. May also prevent misfolding and promote the refolding and proper assembly of unfolded polypeptides generated under stress conditions in the mitochondrial matrix. The sequence is that of Chaperonin CPN60-1, mitochondrial (CPN60I) from Zea mays (Maize).